Reading from the N-terminus, the 527-residue chain is Eukaryotic translation initiation factor 4B1 (527 aa).

Disordered stretches follow at residues 1–370 (MAKP…REVV) and 453–527 (FGQR…RQGW). 2 stretches are compositionally biased toward low complexity: residues 35-45 (AAAGGAASFPS) and 74-85 (GAAGAPRRVAPA). Composition is skewed to basic and acidic residues over residues 102-155 (PRER…DNWG) and 181-194 (RSDD…DKKP). Positions 196-203 (PSRYPSLG) match the Nuclear localization signal motif. Residues 203-232 (GTGGGFRESSGGGFRESSGGGFRESSGGGF) show a composition bias toward gly residues. Over residues 293 to 317 (KPREEVLAEKGLDWRKMEGEIEKKT) the composition is skewed to basic and acidic residues. Low complexity predominate over residues 319 to 336 (RPTSSHSSRPNSAHSSRP). Basic and acidic residues-rich tracts occupy residues 472 to 485 (EEPH…DRPR) and 496 to 510 (PVEE…RERG). The span at 518 to 527 (SDRSSTRQGW) shows a compositional bias: low complexity.

Belongs to the eIF-4 subunit B family. Homodimer. Nonspherical monomer. mRNA-discriminating component of initiation complexes. Post-translationally, phosphorylated.

The protein resides in the nucleus. Promotes the eIF4F and eIF4A RNA-dependent ATP-hydrolysis activity with different efficiency depending on mRNAs, thus providing mRNA discrimination during initiation of translation. In Triticum aestivum (Wheat), this protein is Eukaryotic translation initiation factor 4B1.